The chain runs to 117 residues: DNA-directed RNA polymerase subunit omega (117 aa).

This sequence belongs to the RNA polymerase subunit omega family. The RNAP catalytic core consists of 2 alpha, 1 beta, 1 beta' and 1 omega subunit. When a sigma factor is associated with the core the holoenzyme is formed, which can initiate transcription.

The enzyme catalyses RNA(n) + a ribonucleoside 5'-triphosphate = RNA(n+1) + diphosphate. Functionally, promotes RNA polymerase assembly. Latches the N- and C-terminal regions of the beta' subunit thereby facilitating its interaction with the beta and alpha subunits. The protein is DNA-directed RNA polymerase subunit omega of Roseobacter denitrificans (strain ATCC 33942 / OCh 114) (Erythrobacter sp. (strain OCh 114)).